A 219-amino-acid polypeptide reads, in one-letter code: Guanylate kinase (219 aa).

The region spanning 15 to 194 (GLMFVLSSPS…AFAEVQSILK (180 aa)) is the Guanylate kinase-like domain. Residue 22–29 (SPSGAGKT) coordinates ATP.

The protein belongs to the guanylate kinase family.

The protein localises to the cytoplasm. The enzyme catalyses GMP + ATP = GDP + ADP. Its function is as follows. Essential for recycling GMP and indirectly, cGMP. The sequence is that of Guanylate kinase from Nitrobacter winogradskyi (strain ATCC 25391 / DSM 10237 / CIP 104748 / NCIMB 11846 / Nb-255).